The chain runs to 93 residues: Integration host factor subunit beta (93 aa).

Belongs to the bacterial histone-like protein family. Heterodimer of an alpha and a beta chain.

Functionally, this protein is one of the two subunits of integration host factor, a specific DNA-binding protein that functions in genetic recombination as well as in transcriptional and translational control. This Tolumonas auensis (strain DSM 9187 / NBRC 110442 / TA 4) protein is Integration host factor subunit beta.